Here is a 343-residue protein sequence, read N- to C-terminus: MNRIKVAILFGGCSEEHDVSVKSAIEIAANINKEKYEPLYIGITKSGVWKMCEKPCAEWENDNCYSAVLSPDKKMHGLLVKKNHEYEINHVDVAFSALHGKSGEDGSIQGLFELSGIPFVGCDIQSSAICMDKSLTYIVAKNAGIATPAFWVINKDDRPVAATFTYPVFVKPARSGSSFGVKKVNSADELDYAIESARQYDSKILIEQAVSGCEVGCAVLGNSAALVVGEVDQIRLQYGIFRIHQEVEPEKGSENAVITVPADLSAEERGRIQETAKKIYKALGCRGLARVDMFLQDNGRIVLNEVNTLPGFTSYSRYPRMMAAAGIALPELIDRLIVLALKG.

ATP is bound by residues Lys-133, 169-171, 177-178, 207-214, and Phe-241; these read FVK, SS, and EQAVSGCE. An ATP-grasp domain is found at 137-338; it reads YIVAKNAGIA…LPELIDRLIV (202 aa). Residue His-244 coordinates substrate. 304 to 305 contacts ATP; sequence NE. Mg(2+) contacts are provided by Glu-305 and Asn-307.

It belongs to the D-alanine--D-alanine ligase family. It depends on Mg(2+) as a cofactor. Mn(2+) serves as cofactor.

It localises to the cell membrane. It carries out the reaction (R)-lactate + D-alanine + ATP = D-alanyl-(R)-lactate + ADP + phosphate. In terms of biological role, required for high-level resistance to glycopeptide antibiotics. D-Ala--D-Ala ligase of altered specificity which catalyzes ester bond formation between D-Ala and various D-hydroxy acids; produces a peptidoglycan which does not terminate in D-alanine but in D-lactate, thus preventing vancomycin or teicoplanin binding. This is Vancomycin/teicoplanin A-type resistance protein VanA (vanA) from Enterococcus faecium (Streptococcus faecium).